The following is a 198-amino-acid chain: Uracil phosphoribosyltransferase homolog (198 aa).

It belongs to the UPRTase family.

Its subcellular location is the plastid. The protein localises to the chloroplast. This is Uracil phosphoribosyltransferase homolog from Porphyra purpurea (Red seaweed).